The following is a 164-amino-acid chain: C-phycoerythrin alpha chain (164 aa).

(2R,3E)-phycoerythrobilin contacts are provided by Cys82 and Cys139.

The protein belongs to the phycobiliprotein family. Heterodimer of an alpha and a beta chain. Post-translationally, contains two covalently linked bilin chromophores.

The protein resides in the cellular thylakoid membrane. Functionally, light-harvesting photosynthetic bile pigment-protein from the phycobiliprotein complex. This chain is C-phycoerythrin alpha chain (cpeA), found in Pseudanabaena tenuis (strain PCC 7409).